Consider the following 314-residue polypeptide: tRNA pseudouridine synthase B (314 aa).

Histidine 43 is a substrate binding site. Catalysis depends on aspartate 48, which acts as the Nucleophile. The substrate site is built by tyrosine 76, tyrosine 179, and leucine 200.

It belongs to the pseudouridine synthase TruB family. Type 1 subfamily.

The catalysed reaction is uridine(55) in tRNA = pseudouridine(55) in tRNA. Functionally, responsible for synthesis of pseudouridine from uracil-55 in the psi GC loop of transfer RNAs. The chain is tRNA pseudouridine synthase B from Serratia proteamaculans (strain 568).